The primary structure comprises 46 residues: Transcriptional regulator SEHBP (46 aa).

As to quaternary structure, interacts with histone H2B. Also interacts with chromatin-binding proteins HMGN1 and HMGN3.

It localises to the nucleus. The protein resides in the cytoplasm. Its function is as follows. Plays a role in transcription regulation. The chain is Transcriptional regulator SEHBP from Homo sapiens (Human).